A 343-amino-acid polypeptide reads, in one-letter code: Uroporphyrinogen decarboxylase (343 aa).

Residues 23-27 (RQAGR), D73, Y150, S205, and H322 each bind substrate.

It belongs to the uroporphyrinogen decarboxylase family. Homodimer.

It localises to the cytoplasm. The catalysed reaction is uroporphyrinogen III + 4 H(+) = coproporphyrinogen III + 4 CO2. Its pathway is porphyrin-containing compound metabolism; protoporphyrin-IX biosynthesis; coproporphyrinogen-III from 5-aminolevulinate: step 4/4. Catalyzes the decarboxylation of four acetate groups of uroporphyrinogen-III to yield coproporphyrinogen-III. In Cereibacter sphaeroides (strain KD131 / KCTC 12085) (Rhodobacter sphaeroides), this protein is Uroporphyrinogen decarboxylase.